A 184-amino-acid polypeptide reads, in one-letter code: Large ribosomal subunit protein uL5c (184 aa).

The protein belongs to the universal ribosomal protein uL5 family. In terms of assembly, part of the 50S ribosomal subunit; contacts the 5S rRNA.

The protein resides in the plastid. It is found in the chloroplast. Binds 5S rRNA, forms part of the central protuberance of the 50S subunit. This is Large ribosomal subunit protein uL5c (rpl5) from Ostreococcus tauri.